A 215-amino-acid chain; its full sequence is Pyrrolidone-carboxylate peptidase (215 aa).

Residues glutamate 80, cysteine 143, and histidine 167 contribute to the active site.

This sequence belongs to the peptidase C15 family. In terms of assembly, homotetramer.

The protein resides in the cytoplasm. It carries out the reaction Release of an N-terminal pyroglutamyl group from a polypeptide, the second amino acid generally not being Pro.. Its function is as follows. Removes 5-oxoproline from various penultimate amino acid residues except L-proline. The protein is Pyrrolidone-carboxylate peptidase of Bacillus cereus (strain ATCC 10987 / NRS 248).